The chain runs to 60 residues: Large ribosomal subunit protein uL30 (60 aa).

Belongs to the universal ribosomal protein uL30 family. As to quaternary structure, part of the 50S ribosomal subunit.

The polypeptide is Large ribosomal subunit protein uL30 (Thermus thermophilus (strain ATCC BAA-163 / DSM 7039 / HB27)).